The chain runs to 254 residues: Putative epimerase LsrE (254 aa).

A helical transmembrane segment spans residues 14–34 (VALLASYPLSVGILAGQWIAL). The a divalent metal cation site is built by H50, D52, and H81. D52 acts as the Proton acceptor in catalysis. Substrate-binding positions include H81, 166 to 169 (GYGS), 199 to 201 (DGS), and 221 to 222 (GS). Position 199 (D199) interacts with a divalent metal cation. Catalysis depends on D199, which acts as the Proton donor.

The protein belongs to the ribulose-phosphate 3-epimerase family. A divalent metal cation is required as a cofactor.

It is found in the cell membrane. The chain is Putative epimerase LsrE (lsrE) from Salmonella typhi.